The chain runs to 862 residues: DNA mismatch repair protein MutS (862 aa).

608-615 (GPNMAGKS) contacts ATP.

It belongs to the DNA mismatch repair MutS family.

Its function is as follows. This protein is involved in the repair of mismatches in DNA. It is possible that it carries out the mismatch recognition step. This protein has a weak ATPase activity. This is DNA mismatch repair protein MutS from Bacteroides fragilis (strain YCH46).